Here is a 99-residue protein sequence, read N- to C-terminus: Sm-like protein LSM7 (99 aa).

Positions 6–86 constitute a Sm domain; it reads ETVLDLAKFV…VMLVSPTDGT (81 aa).

It belongs to the snRNP Sm proteins family. As to quaternary structure, component of the heptameric LSM1-LSM7 complex that forms a seven-membered ring structure with a donut shape. The LSM subunits are arranged in the order LSM1, LSM2, LSM3, LSM6, LSM5, LSM7 and LSM4. Component of the heptameric LSM2-LSM8 complex that forms a seven-membered ring structure with a donut shape. The LSM subunits are arranged in the order LSM8, LSM2, LSM3, LSM6, LSM5, LSM7 and LSM4. LSM7 subunit interacts only with its two neighboring subunits, LSM5 and LSM4. Expressed in roots, leaves, stems, flowers and siliques.

The protein localises to the cytoplasm. It is found in the nucleus. Its function is as follows. Component of LSM protein complexes, which are involved in RNA processing. Component of the cytoplasmic LSM1-LSM7 complex which is involved in mRNA degradation by promoting decapping and leading to accurate 5'-3' mRNA decay. The cytoplasmic LSM1-LSM7 complex regulates developmental gene expression by the decapping of specific development-related transcripts. Component of the nuclear LSM2-LSM8 complex which is involved splicing nuclear mRNAs. LSM2-LSM8 binds directly to the U6 small nuclear RNAs (snRNAs) and is essential for accurate splicing of selected development-related mRNAs through the stabilization of the spliceosomal U6 snRNA. Plays a critical role in the regulation of development-related gene expression. This Arabidopsis thaliana (Mouse-ear cress) protein is Sm-like protein LSM7.